We begin with the raw amino-acid sequence, 137 residues long: Large ribosomal subunit protein uL16 (137 aa).

Residues 1–22 (MLQPKRTKFRKVQKGRNRGLAH) form a disordered region.

It belongs to the universal ribosomal protein uL16 family. As to quaternary structure, part of the 50S ribosomal subunit.

Functionally, binds 23S rRNA and is also seen to make contacts with the A and possibly P site tRNAs. In Chromohalobacter salexigens (strain ATCC BAA-138 / DSM 3043 / CIP 106854 / NCIMB 13768 / 1H11), this protein is Large ribosomal subunit protein uL16.